A 656-amino-acid chain; its full sequence is Chaperone protein DnaK (656 aa).

Threonine 204 carries the phosphothreonine; by autocatalysis modification. The tract at residues 607-656 is disordered; that stretch reads VYAKKGGAAGAPPGGEAEGEPQAQAGGKKEDVVDAEFEEVKDEKKKDEDK. The span at 620 to 632 shows a compositional bias: low complexity; sequence GGEAEGEPQAQAG. Basic and acidic residues predominate over residues 647–656; sequence KDEKKKDEDK.

The protein belongs to the heat shock protein 70 family.

Its function is as follows. Acts as a chaperone. This chain is Chaperone protein DnaK, found in Coxiella burnetii (strain CbuK_Q154) (Coxiella burnetii (strain Q154)).